Reading from the N-terminus, the 138-residue chain is Acidic phospholipase A2 BthA-1 (138 aa).

The signal sequence occupies residues 1-16; the sequence is MRTLWIMAVLLVGVEG. 7 cysteine pairs are disulfide-bonded: cysteine 42/cysteine 131, cysteine 44/cysteine 60, cysteine 59/cysteine 111, cysteine 65/cysteine 138, cysteine 66/cysteine 104, cysteine 73/cysteine 97, and cysteine 91/cysteine 102. Ca(2+) is bound by residues tyrosine 43, glycine 47, and glycine 48. Residue histidine 63 is part of the active site. Residue aspartate 64 coordinates Ca(2+). Aspartate 105 is an active-site residue.

Belongs to the phospholipase A2 family. Group II subfamily. D49 sub-subfamily. As to quaternary structure, homodimer; non-covalently linked. The cofactor is Ca(2+). As to expression, expressed by the venom gland.

Its subcellular location is the secreted. The enzyme catalyses a 1,2-diacyl-sn-glycero-3-phosphocholine + H2O = a 1-acyl-sn-glycero-3-phosphocholine + a fatty acid + H(+). Its activity is regulated as follows. Inhibited by EDTA and bromophenacyl bromide (BPB). Snake venom phospholipase A2 (PLA2) that displays edema-inducing activities (activity that is inhibited by EDTA and dexamethasone), inhibits phospholipid-dependent collagen/ADP-induced platelet aggregation, possess hypotensive as well as anticoagulant activities. In addition, this enzyme shows bactericidal activity against E.coli and S.aureus. PLA2 catalyzes the calcium-dependent hydrolysis of the 2-acyl groups in 3-sn-phosphoglycerides. This Bothrops jararacussu (Jararacussu) protein is Acidic phospholipase A2 BthA-1.